We begin with the raw amino-acid sequence, 321 residues long: Chlorohydroquinone/hydroquinone 1,2-dioxygenase (321 aa).

2 VOC domains span residues 10–138 (GLHH…IIEQ) and 160–282 (GFHS…ASVT). Fe cation contacts are provided by His162, His229, and Glu278.

The protein belongs to the extradiol ring-cleavage dioxygenase family. It depends on Fe(2+) as a cofactor.

The catalysed reaction is hydroquinone + O2 = (2E,4Z)-4-hydroxy-6-oxohexa-2,4-dienoate + H(+). It carries out the reaction chlorohydroquinone + O2 = 5-chlorocarbonyl-4-hydroxy-penta-2,4-dienoate + H(+). The protein operates within xenobiotic degradation; gamma-hexachlorocyclohexane degradation. Its function is as follows. Cleaves aromatic rings with two hydroxyl groups at para positions with consumption of O(2). Catalyzes the cleavage of chlorohydroquinone (CHQ), as part of the gamma-hexachlorocyclohexane (gamma-HCH or lindane) degradation pathway, producing 5-chlorocarbonyl-4-hydroxy-penta-2,4-dienoate as an intermediate product that can react with water yielding maleylacetate. This degradation pathway allows S.japonicum UT26 to grow on gamma-HCH as the sole source of carbon and energy. Can also use hydroquinone (HQ) as substrate, leading to gamma-hydroxymuconic semialdehyde. Is not able to convert catechol, contrary to meta-cleavage dioxygenases. The sequence is that of Chlorohydroquinone/hydroquinone 1,2-dioxygenase from Sphingobium indicum (strain DSM 16413 / CCM 7287 / MTCC 6362 / UT26 / NBRC 101211 / UT26S) (Sphingobium japonicum).